The chain runs to 126 residues: Protein ApaG (126 aa).

The region spanning 2-126 (SDTQHQVNVR…FRLAVPGALH (125 aa)) is the ApaG domain.

The polypeptide is Protein ApaG (Pseudomonas paraeruginosa (strain DSM 24068 / PA7) (Pseudomonas aeruginosa (strain PA7))).